The following is a 523-amino-acid chain: Calcium-dependent protein kinase 1 (523 aa).

Positions 1 to 36 are disordered; it reads MGCNQSKSANDVRGNKVNHVNSKKKNNKREDTNDGE. G2 carries the N-myristoyl glycine lipid modification. The S-palmitoyl cysteine moiety is linked to residue C3. Residues 57 to 324 form the Protein kinase domain; that stretch reads YFKVRKLGSG…AEEALNSRWI (268 aa). ATP is bound by residues 63-71, K86, and K90; that span reads LGSGAYGEV. At S65 the chain carries Phosphoserine. S117 is subject to Phosphoserine. D190 (proton acceptor) is an active-site residue. A phosphoserine mark is found at S216 and S219. The residue at position 230 (T230) is a Phosphothreonine. At S334 the chain carries Phosphoserine. A J domain autoinhibitory motif motif is present at residues 345–352; it reads NMRKFEGS. The tract at residues 345–363 is j domain; the sequence is NMRKFEGSQKLAQAAILFI. The J domain interacts with the EF-hand domains motif lies at 353–363; that stretch reads QKLAQAAILFI. EF-hand domains lie at 371–406, 415–450, 451–486, and 487–520; these read EERK…LRNF, NVEE…KQIL, FSEE…TSIS, and EKTW…ICDH. Ca(2+) is bound by residues D384, N386, D388, Q390, E395, D428, D430, N432, Y434, E439, D464, D466, S468, K470, E475, D498, N500, D502, M504, and E509.

The protein belongs to the protein kinase superfamily. Ser/Thr protein kinase family. CDPK subfamily. As to quaternary structure, monomer. Requires Mg(2+) as cofactor. Myristoylated. Myristoylation and palmitoylation are required for the localization to the parasitophorous vacuole membrane. In terms of processing, palmitoylated. Palmitoylation increases in merozoites in response to low level of extracellular K(+) in the host blood. Myristoylation and palmitoylation are required for the localization to the parasitophorous vacuole membrane. Post-translationally, phosphorylation at Thr-230 may regulate CDPK1 kinase activity. Phosphorylation increases in response to an increase in intracellular Ca(2+) levels. Autophosphorylated in vitro. Autophosphorylation does not affect membrane localization in vitro.

The protein resides in the membrane. The protein localises to the cell membrane. It localises to the parasitophorous vacuole membrane. It is found in the cytoplasm. Its subcellular location is the cell projection. The protein resides in the cilium. The protein localises to the flagellum. It localises to the host cell membrane. The enzyme catalyses L-seryl-[protein] + ATP = O-phospho-L-seryl-[protein] + ADP + H(+). It catalyses the reaction L-threonyl-[protein] + ATP = O-phospho-L-threonyl-[protein] + ADP + H(+). With respect to regulation, activated by calcium. Upon calcium binding to the EF-hand domains, the C-terminus of the junction domain (J domain) undergoes a conformational change which results in the dissociation of the pseudo-substrate inhibitory motif from the catalytic domain. This, in turn may facilitate the autophosphorylation of the activation loop at Thr-230, which leads to the kinase activation. Calcium-dependent protein kinase which acts as a sensor and effector of intracellular Ca(2+) levels probably in part downstream of cGMP-activated PKG kinase. During the liver stage, involved in sporozoite motility and thus in sporozoite invasion of host hepatocytes, probably together with CDPK4 and CDPK5. In the mosquito midgut and during the last stage of male gamete exflagellation, may play a role in the rupture of the host erythrocyte membrane. In the mosquito midgut, required for the differentiation of the zygote into the ookinete by promoting the translational activation of a subset of repressed mRNAs; these mRNAs are kept repressed in the zygote by the DOZI- or CITH-containing mRNP complexes. Dispensable during the asexual blood stage. The sequence is that of Calcium-dependent protein kinase 1 from Plasmodium berghei (strain Anka).